A 458-amino-acid polypeptide reads, in one-letter code: Adenylosuccinate synthetase (458 aa).

GTP is bound by residues 17 to 23 (GDEGKGK) and 45 to 47 (GHT). Asp-18 functions as the Proton acceptor in the catalytic mechanism. Positions 18 and 45 each coordinate Mg(2+). IMP is bound by residues 18-21 (DEGK), 43-46 (NAGH), Thr-137, Arg-151, Gln-247, Thr-262, and Arg-330. His-46 functions as the Proton donor in the catalytic mechanism. Substrate is bound at residue 326–332 (VTTGRSR). GTP-binding positions include Arg-332, 358 to 360 (KLD), and 440 to 442 (STS).

It belongs to the adenylosuccinate synthetase family. As to quaternary structure, homodimer. Requires Mg(2+) as cofactor.

The protein localises to the cytoplasm. The enzyme catalyses IMP + L-aspartate + GTP = N(6)-(1,2-dicarboxyethyl)-AMP + GDP + phosphate + 2 H(+). Its pathway is purine metabolism; AMP biosynthesis via de novo pathway; AMP from IMP: step 1/2. Its function is as follows. Plays an important role in the de novo pathway of purine nucleotide biosynthesis. Catalyzes the first committed step in the biosynthesis of AMP from IMP. The sequence is that of Adenylosuccinate synthetase from Verminephrobacter eiseniae (strain EF01-2).